The following is a 142-amino-acid chain: Large ribosomal subunit protein cL37 alpha (142 aa).

The N-terminal 62 residues, 1–62 (MALLSPLLSL…AQKRGTVVAM (62 aa)), are a transit peptide targeting the chloroplast. The disordered stretch occupies residues 123–142 (RKLRKRGAWPPSKMKKLKNV).

The protein belongs to the chloroplast-specific ribosomal protein cL37 family. In terms of assembly, component of the chloroplast large ribosomal subunit (LSU). Mature 70S chloroplast ribosomes of higher plants consist of a small (30S) and a large (50S) subunit. The 30S small subunit contains 1 molecule of ribosomal RNA (16S rRNA) and 24 different proteins. The 50S large subunit contains 3 rRNA molecules (23S, 5S and 4.5S rRNA) and 33 different proteins.

Its subcellular location is the plastid. The protein resides in the chloroplast. Functionally, component of the chloroplast ribosome (chloro-ribosome), a dedicated translation machinery responsible for the synthesis of chloroplast genome-encoded proteins, including proteins of the transcription and translation machinery and components of the photosynthetic apparatus. This Spinacia oleracea (Spinach) protein is Large ribosomal subunit protein cL37 alpha (PSRP5).